The following is a 258-amino-acid chain: uncharacterized protein (258 aa).

In terms of domain architecture, HTH deoR-type spans 3 to 58 (VAERQQKIVEIVNMRSSIRVSELSDIFSVTEETIRRDLEKLEKEHKLSRSHGGAVS). Residues 20-39 (IRVSELSDIFSVTEETIRRD) constitute a DNA-binding region (H-T-H motif).

This is an uncharacterized protein from Bacillus subtilis (strain 168).